We begin with the raw amino-acid sequence, 334 residues long: MNYIGSKLKLSNWLETEISNVAGHSLSDKVFCDLFAGTGIVGRKFKTNVKQVIANDMEYYSYVLNRNYIGNCQSILKAGELLQRLEQLPPREGLIYQHYCLGSGSERQYFSDENGKKIDAVRIQIEEWKNTRYIDEDTYYFLLATLLEGADKVANTASVYGAFLKNLKKSALKPLSLEPALFEIGSDGHQVYQADANQLIKNISGDILYLDPPYNARQYGANYHLLNSIALYDDFTPKGKTGLREYSRSKYCSKSDVVPVFEALIRDADFQYIFLSYNNEGLMSVGQVREIFERFGKYDLVQTEYRRFKADKTENRNHKANSTFEYLHILEKTF.

Belongs to the N(4)/N(6)-methyltransferase family.

The catalysed reaction is a 2'-deoxyadenosine in DNA + S-adenosyl-L-methionine = an N(6)-methyl-2'-deoxyadenosine in DNA + S-adenosyl-L-homocysteine + H(+). Its function is as follows. A methylase, recognizes the double-stranded sequence 5'-CATG-3', methylates A-2 on both strands and protects the DNA from cleavage by the NlaIII endonuclease. The protein is Type II methyltransferase M.NlaIII (nlaIIIM) of Neisseria lactamica.